Here is a 382-residue protein sequence, read N- to C-terminus: B3 domain-containing protein Os03g0622100 (382 aa).

A DNA-binding region (TF-B3 1) is located at residues 29-123 (CKHFLTYMVG…SFDVLIFDPS (95 aa)). Composition is skewed to basic and acidic residues over residues 136–158 (RGFGREEKSAGAEGGGRDGDKNG) and 193–202 (QDHREEKKEG). The interval 136 to 222 (RGFGREEKSA…EDVDKDGEDR (87 aa)) is disordered. The segment covering 203 to 218 (DDEDEDEDEDEDVDKD) has biased composition (acidic residues). Residues 261–363 (KVIHASHLLS…AGDRLRRRPR (103 aa)) constitute a DNA-binding region (TF-B3 2).

It is found in the nucleus. This chain is B3 domain-containing protein Os03g0622100, found in Oryza sativa subsp. japonica (Rice).